Here is a 91-residue protein sequence, read N- to C-terminus: Small ribosomal subunit protein uS19 (91 aa).

It belongs to the universal ribosomal protein uS19 family.

In terms of biological role, protein S19 forms a complex with S13 that binds strongly to the 16S ribosomal RNA. This is Small ribosomal subunit protein uS19 from Psychrobacter sp. (strain PRwf-1).